Here is a 474-residue protein sequence, read N- to C-terminus: Probable threonine--tRNA ligase, mitochondrial (474 aa).

Residues 1-27 constitute a mitochondrion transit peptide; that stretch reads MMKLKKFQLHTPFAHSCNRVEIYTARF.

This sequence belongs to the class-II aminoacyl-tRNA synthetase family.

The protein localises to the mitochondrion matrix. The enzyme catalyses tRNA(Thr) + L-threonine + ATP = L-threonyl-tRNA(Thr) + AMP + diphosphate + H(+). The chain is Probable threonine--tRNA ligase, mitochondrial from Schizosaccharomyces pombe (strain 972 / ATCC 24843) (Fission yeast).